Consider the following 198-residue polypeptide: MAQINPLPVPLGPWKITVYDQENFQGKRMEFTSSCANIMECGFDNIRSLKVECGAWIGYEHTSFCGQQFVLERGEYPRWDAWSGSNAYHIERLMSFRPICSANHIESKLVIFEKENFVGPQWELCDDYPSLQAMGWGNNEVGSMKVQCGAWVCYQYPGYRGYQYILESDHHGGEYKHWREWGSHAQTFQIQSIRRIQQ.

Residues Met1 to Pro13 are N-terminal arm. Beta/gamma crystallin 'Greek key' domains lie at Trp14–Cys53 and Gly54–Cys100. The connecting peptide stretch occupies residues Ser101–Glu106. 2 consecutive Beta/gamma crystallin 'Greek key' domains span residues Ser107–Cys148 and Gly149–Gln197.

The protein belongs to the beta/gamma-crystallin family. Homo/heterodimer, or complexes of higher-order. The structure of beta-crystallin oligomers seems to be stabilized through interactions between the N-terminal arms. The N-terminus is blocked.

Its function is as follows. Crystallins are the dominant structural components of the vertebrate eye lens. This Aquarana catesbeiana (American bullfrog) protein is Beta-crystallin A1-2.